A 412-amino-acid polypeptide reads, in one-letter code: Probable ribonuclease FAU-1 (412 aa).

It belongs to the FAU-1 family.

Its function is as follows. Probable RNase involved in rRNA stability through maturation and/or degradation of precursor rRNAs. Binds to RNA in loop regions with AU-rich sequences. This Sulfurisphaera tokodaii (strain DSM 16993 / JCM 10545 / NBRC 100140 / 7) (Sulfolobus tokodaii) protein is Probable ribonuclease FAU-1.